Here is a 152-residue protein sequence, read N- to C-terminus: Transcriptional regulator MraZ (152 aa).

SpoVT-AbrB domains lie at 5–52 (ANAI…PLPE) and 81–124 (ATEG…DHSV).

The protein belongs to the MraZ family. Forms oligomers.

Its subcellular location is the cytoplasm. It localises to the nucleoid. In Pseudoalteromonas atlantica (strain T6c / ATCC BAA-1087), this protein is Transcriptional regulator MraZ.